The primary structure comprises 343 residues: Twinfilin (343 aa).

ADF-H domains lie at 4–139 and 177–312; these read QTGI…KHKV and GINC…EELH. A disordered region spans residues 314-343; it reads RKLNLRPQFSKPKGPPSRGAKRLTKPQAVE.

It belongs to the actin-binding proteins ADF family. Twinfilin subfamily. As to quaternary structure, interacts with G-actin; ADP-actin form.

The protein resides in the cytoplasm. It localises to the cytoskeleton. Its subcellular location is the cell cortex. Functionally, actin-binding protein involved in motile and morphological processes. Inhibits actin polymerization, likely by sequestering G-actin. The chain is Twinfilin (twf) from Anopheles gambiae (African malaria mosquito).